A 75-amino-acid polypeptide reads, in one-letter code: High-potential iron-sulfur protein (75 aa).

Residues cysteine 38, cysteine 41, cysteine 54, and cysteine 68 each coordinate [4Fe-4S] cluster.

Homodimer. Monomer at different ionic strengths.

Functionally, specific class of high-redox-potential 4Fe-4S ferredoxins. Functions in anaerobic electron transport in most purple and in some other photosynthetic bacteria and in at least one genus (Paracoccus) of halophilic, denitrifying bacteria. Competent in photosynthetic electron transfer to oxidized cytochrome bc1 complex via the membrane-bound c-type tetraheme. This is High-potential iron-sulfur protein (hip) from Rhodoferax fermentans.